Here is a 334-residue protein sequence, read N- to C-terminus: Nucleoid-associated protein Pfl01_0983 (334 aa).

Belongs to the YejK family.

It is found in the cytoplasm. Its subcellular location is the nucleoid. The protein is Nucleoid-associated protein Pfl01_0983 of Pseudomonas fluorescens (strain Pf0-1).